Consider the following 326-residue polypeptide: tRNA-dihydrouridine(20a/20b) synthase [NAD(P)+] (326 aa).

Residues 26-28 and glutamine 79 contribute to the FMN site; that span reads PMV. Catalysis depends on cysteine 108, which acts as the Proton donor. Residues lysine 149, histidine 177, 208–210, and 232–233 contribute to the FMN site; these read NGD and AR.

It belongs to the Dus family. Dus4 subfamily. FMN serves as cofactor.

It is found in the mitochondrion. It carries out the reaction 5,6-dihydrouridine(20a) in tRNA + NADP(+) = uridine(20a) in tRNA + NADPH + H(+). The enzyme catalyses 5,6-dihydrouridine(20a) in tRNA + NAD(+) = uridine(20a) in tRNA + NADH + H(+). It catalyses the reaction 5,6-dihydrouridine(20b) in tRNA + NAD(+) = uridine(20b) in tRNA + NADH + H(+). The catalysed reaction is 5,6-dihydrouridine(20b) in tRNA + NADP(+) = uridine(20b) in tRNA + NADPH + H(+). It carries out the reaction a 5,6-dihydrouridine in mRNA + NAD(+) = a uridine in mRNA + NADH + H(+). The enzyme catalyses a 5,6-dihydrouridine in mRNA + NADP(+) = a uridine in mRNA + NADPH + H(+). In terms of biological role, catalyzes the synthesis of dihydrouridine, a modified base found in the D-loop of most tRNAs. Also able to mediate dihydrouridylation of some mRNAs, thereby affecting their translation. This chain is tRNA-dihydrouridine(20a/20b) synthase [NAD(P)+], found in Schizosaccharomyces pombe (strain 972 / ATCC 24843) (Fission yeast).